The sequence spans 174 residues: C-type lectin domain family 2 member A (174 aa).

Residues 1–27 (MINPELRDGRADGFIHRIVPKLIQNWK) are Cytoplasmic-facing. A helical; Signal-anchor for type II membrane protein transmembrane segment spans residues 28-48 (IGLMCFLSIIITTVCIIMIAT). Residues 49–174 (WSKHAKPVAC…WICSKPKYFL (126 aa)) are Extracellular-facing. Cysteines 58 and 69 form a disulfide. The region spanning 65–174 (VRDKCFYFSD…WICSKPKYFL (110 aa)) is the C-type lectin domain. Asn-78, Asn-130, and Asn-143 each carry an N-linked (GlcNAc...) asparagine glycan. A disulfide bridge links Cys-86 with Cys-167.

Homodimer; non-disulfide-linked. Interacts with KLRB1. Interacts with KLRF2. In terms of processing, N-glycosylated. As to expression, mainly expressed in skin. Also expressed in keratinocytes, spleen, thymus, small intestine, peripheral blood monocytes, bone marrow, ovary, testis and skin. High expression in CD8(+), B-lymphocytes and naive CD4(+) T-cells. Restricted mostly to proliferating lymphocytes. Not detected in myeloid leukocytes or natural killer (NK) cells.

The protein resides in the cell membrane. Its function is as follows. Membrane-bound protein expressed mainly on keratinocytes which acts as a ligand to stimulate the activating receptor NKp65/KLRF2, expressed on the surface of natural killer (NK) cells. Facilitates thereby dedicated immune recognition of keratinocytes leading to natural killer cell mediated cytotoxicity. Also plays a role in modulating the extent of T-cell expansion. The chain is C-type lectin domain family 2 member A (CLEC2A) from Homo sapiens (Human).